The following is a 285-amino-acid chain: NADPH-dependent 7-cyano-7-deazaguanine reductase (285 aa).

80 to 82 serves as a coordination point for substrate; the sequence is VES. 82 to 83 is a binding site for NADPH; the sequence is SK. Cysteine 191 serves as the catalytic Thioimide intermediate. Aspartate 198 functions as the Proton donor in the catalytic mechanism. A substrate-binding site is contributed by 231–232; sequence HE. 260–261 serves as a coordination point for NADPH; it reads RG.

This sequence belongs to the GTP cyclohydrolase I family. QueF type 2 subfamily. As to quaternary structure, homodimer.

It is found in the cytoplasm. The catalysed reaction is 7-aminomethyl-7-carbaguanine + 2 NADP(+) = 7-cyano-7-deazaguanine + 2 NADPH + 3 H(+). It functions in the pathway tRNA modification; tRNA-queuosine biosynthesis. Its function is as follows. Catalyzes the NADPH-dependent reduction of 7-cyano-7-deazaguanine (preQ0) to 7-aminomethyl-7-deazaguanine (preQ1). The polypeptide is NADPH-dependent 7-cyano-7-deazaguanine reductase (Psychrobacter cryohalolentis (strain ATCC BAA-1226 / DSM 17306 / VKM B-2378 / K5)).